A 353-amino-acid polypeptide reads, in one-letter code: Photosystem II D2 protein (353 aa).

T2 is modified (N-acetylthreonine). T2 carries the phosphothreonine modification. A helical membrane pass occupies residues 41–61; that stretch reads CAYFALGGWFTGTTFVTSWYT. H118 contributes to the chlorophyll a binding site. The chain crosses the membrane as a helical span at residues 125-141; sequence GFMLRQFELARSVQLRP. Residues Q130 and N143 each contribute to the pheophytin a site. The chain crosses the membrane as a helical span at residues 153–166; that stretch reads VFVSVFFIYPLGQS. H198 lines the chlorophyll a pocket. The helical transmembrane segment at 208-228 threads the bilayer; the sequence is AALLCAIHGATVENTLFEDGD. 2 residues coordinate a plastoquinone: H215 and F262. H215 serves as a coordination point for Fe cation. H269 serves as a coordination point for Fe cation. The chain crosses the membrane as a helical span at residues 279–295; sequence GLWMSALGVVGLALNLR.

It belongs to the reaction center PufL/M/PsbA/D family. PSII is composed of 1 copy each of membrane proteins PsbA, PsbB, PsbC, PsbD, PsbE, PsbF, PsbH, PsbI, PsbJ, PsbK, PsbL, PsbM, PsbT, PsbX, PsbY, PsbZ, Psb30/Ycf12, at least 3 peripheral proteins of the oxygen-evolving complex and a large number of cofactors. It forms dimeric complexes. The D1/D2 heterodimer binds P680, chlorophylls that are the primary electron donor of PSII, and subsequent electron acceptors. It shares a non-heme iron and each subunit binds pheophytin, quinone, additional chlorophylls, carotenoids and lipids. There is also a Cl(-1) ion associated with D1 and D2, which is required for oxygen evolution. The PSII complex binds additional chlorophylls, carotenoids and specific lipids. is required as a cofactor.

It localises to the plastid membrane. The enzyme catalyses 2 a plastoquinone + 4 hnu + 2 H2O = 2 a plastoquinol + O2. Photosystem II (PSII) is a light-driven water:plastoquinone oxidoreductase that uses light energy to abstract electrons from H(2)O, generating O(2) and a proton gradient subsequently used for ATP formation. It consists of a core antenna complex that captures photons, and an electron transfer chain that converts photonic excitation into a charge separation. The D1/D2 (PsbA/PsbD) reaction center heterodimer binds P680, the primary electron donor of PSII as well as several subsequent electron acceptors. D2 is needed for assembly of a stable PSII complex. The polypeptide is Photosystem II D2 protein (Cuscuta exaltata (Tall dodder)).